The following is a 219-amino-acid chain: Octanoyltransferase (219 aa).

One can recognise a BPL/LPL catalytic domain in the interval 37-219; it reads EHSPDQLWIL…DFNDVQVILQ (183 aa). Substrate-binding positions include 76 to 83, 143 to 145, and 156 to 158; these read RGGQVTWH, SLG, and GLA. The active-site Acyl-thioester intermediate is the cysteine 174.

This sequence belongs to the LipB family.

It is found in the cytoplasm. The enzyme catalyses octanoyl-[ACP] + L-lysyl-[protein] = N(6)-octanoyl-L-lysyl-[protein] + holo-[ACP] + H(+). Its pathway is protein modification; protein lipoylation via endogenous pathway; protein N(6)-(lipoyl)lysine from octanoyl-[acyl-carrier-protein]: step 1/2. Catalyzes the transfer of endogenously produced octanoic acid from octanoyl-acyl-carrier-protein onto the lipoyl domains of lipoate-dependent enzymes. Lipoyl-ACP can also act as a substrate although octanoyl-ACP is likely to be the physiological substrate. This Acinetobacter baylyi (strain ATCC 33305 / BD413 / ADP1) protein is Octanoyltransferase.